We begin with the raw amino-acid sequence, 182 residues long: Large ribosomal subunit protein uL5 (182 aa).

Belongs to the universal ribosomal protein uL5 family. As to quaternary structure, part of the 50S ribosomal subunit; part of the 5S rRNA/L5/L18/L25 subcomplex. Contacts the 5S rRNA and the P site tRNA. Forms a bridge to the 30S subunit in the 70S ribosome.

In terms of biological role, this is one of the proteins that bind and probably mediate the attachment of the 5S RNA into the large ribosomal subunit, where it forms part of the central protuberance. In the 70S ribosome it contacts protein S13 of the 30S subunit (bridge B1b), connecting the 2 subunits; this bridge is implicated in subunit movement. Contacts the P site tRNA; the 5S rRNA and some of its associated proteins might help stabilize positioning of ribosome-bound tRNAs. The polypeptide is Large ribosomal subunit protein uL5 (Borreliella afzelii (strain PKo) (Borrelia afzelii)).